Here is a 278-residue protein sequence, read N- to C-terminus: 4-deoxy-L-threo-5-hexosulose-uronate ketol-isomerase (278 aa).

Zn(2+)-binding residues include H196, H198, E203, and H245.

Belongs to the KduI family. Zn(2+) serves as cofactor.

It catalyses the reaction 5-dehydro-4-deoxy-D-glucuronate = 3-deoxy-D-glycero-2,5-hexodiulosonate. It participates in glycan metabolism; pectin degradation; 2-dehydro-3-deoxy-D-gluconate from pectin: step 4/5. Its function is as follows. Catalyzes the isomerization of 5-dehydro-4-deoxy-D-glucuronate to 3-deoxy-D-glycero-2,5-hexodiulosonate. The polypeptide is 4-deoxy-L-threo-5-hexosulose-uronate ketol-isomerase (Yersinia pseudotuberculosis serotype O:1b (strain IP 31758)).